Consider the following 468-residue polypeptide: Chromosomal replication initiator protein DnaA (468 aa).

Residues 1-84 (MSSSLWLQCM…RFEVGSRPVA (84 aa)) form a domain I, interacts with DnaA modulators region. A disordered region spans residues 81-113 (RPVAAPKPAPTRTPADVAAESSAPAQLQARKPV). The tract at residues 84 to 131 (AAPKPAPTRTPADVAAESSAPAQLQARKPVHKTWDDDAQAIADINHRS) is domain II. The domain III, AAA+ region stretch occupies residues 132-348 (NVNPKHKFNN…GALNRVIANA (217 aa)). ATP-binding residues include glycine 176, glycine 178, lysine 179, and threonine 180. Residues 349–468 (NFTGRPITID…YSNLIRTLSS (120 aa)) form a domain IV, binds dsDNA region.

This sequence belongs to the DnaA family. As to quaternary structure, oligomerizes as a right-handed, spiral filament on DNA at oriC.

Its subcellular location is the cytoplasm. Plays an essential role in the initiation and regulation of chromosomal replication. ATP-DnaA binds to the origin of replication (oriC) to initiate formation of the DNA replication initiation complex once per cell cycle. Binds the DnaA box (a 9 base pair repeat at the origin) and separates the double-stranded (ds)DNA. Forms a right-handed helical filament on oriC DNA; dsDNA binds to the exterior of the filament while single-stranded (ss)DNA is stabiized in the filament's interior. The ATP-DnaA-oriC complex binds and stabilizes one strand of the AT-rich DNA unwinding element (DUE), permitting loading of DNA polymerase. After initiation quickly degrades to an ADP-DnaA complex that is not apt for DNA replication. Binds acidic phospholipids. This chain is Chromosomal replication initiator protein DnaA, found in Vibrio vulnificus (strain CMCP6).